The sequence spans 614 residues: UPF0329 protein ECU03_0090 (614 aa).

2 stretches are compositionally biased toward basic and acidic residues: residues 317–338 (EREEAEKMRGEEERRKKEEESL) and 345–354 (LRMEEKEKSK). Residues 317-420 (EREEAEKMRG…KKSRSKGHRY (104 aa)) form a disordered region. Positions 355–364 (SRGKKKKGGK) are enriched in basic residues. The span at 372–381 (AKMEEEKKDS) shows a compositional bias: basic and acidic residues. A compositionally biased stretch (acidic residues) spans 382-394 (EEVEESAEAEVSL). The segment covering 408 to 420 (SSKKKSRSKGHRY) has biased composition (basic residues).

Belongs to the UPF0329 family.

This Encephalitozoon cuniculi (strain GB-M1) (Microsporidian parasite) protein is UPF0329 protein ECU03_0090.